A 248-amino-acid polypeptide reads, in one-letter code: Myelin protein P0 (248 aa).

A signal peptide spans 1–28; sequence MAPGAPSSSPSPILAALLFSSLVLSPVQ. The Extracellular segment spans residues 29–155; that stretch reads AIVVYTDKEV…VFEKVPTRYG (127 aa). An Ig-like V-type domain is found at 30 to 143; the sequence is IVVYTDKEVH…DIVGKTSQVT (114 aa). Cysteine 50 and cysteine 127 are joined by a disulfide. N-linked (GlcNAc...) (complex) asparagine glycosylation occurs at asparagine 122. A helical membrane pass occupies residues 156 to 176; it reads VVLGAVIGGVLGVVLLALLLF. At 177-248 the chain is on the cytoplasmic side; the sequence is YLIRYCWLRR…GLGESRKDKK (72 aa). Serine 210 bears the Phosphoserine; by PKC mark. Residues 224–248 form a disordered region; sequence DHSRSTKAASEKKTKGLGESRKDKK. Residues serine 226 and serine 228 each carry the phosphoserine modification. 2 positions are modified to phosphoserine; by PKC: serine 233 and serine 243.

This sequence belongs to the myelin P0 protein family. Homodimer and homotetramer. Post-translationally, N-glycosylated; contains sulfate-substituted glycan. Found only in peripheral nervous system Schwann cells.

It is found in the cell membrane. Functionally, is an adhesion molecule necessary for normal myelination in the peripheral nervous system. It mediates adhesion between adjacent myelin wraps and ultimately drives myelin compaction. The protein is Myelin protein P0 (MPZ) of Bos taurus (Bovine).